Reading from the N-terminus, the 198-residue chain is Prolactin (198 aa).

Intrachain disulfides connect Cys-4–Cys-11, Cys-58–Cys-173, and Cys-190–Cys-198.

This sequence belongs to the somatotropin/prolactin family. Pituitary gland.

The protein localises to the secreted. The protein is Prolactin of Chelonia mydas (Green sea-turtle).